A 325-amino-acid chain; its full sequence is Biotin synthase (325 aa).

Positions 49-279 (VGDKVELCSI…DKNIRYAGGR (231 aa)) constitute a Radical SAM core domain. [4Fe-4S] cluster is bound by residues Cys66, Cys70, and Cys73. [2Fe-2S] cluster contacts are provided by Cys144, Cys204, and Arg274.

Belongs to the radical SAM superfamily. Biotin synthase family. In terms of assembly, homodimer. [4Fe-4S] cluster serves as cofactor. [2Fe-2S] cluster is required as a cofactor.

It catalyses the reaction (4R,5S)-dethiobiotin + (sulfur carrier)-SH + 2 reduced [2Fe-2S]-[ferredoxin] + 2 S-adenosyl-L-methionine = (sulfur carrier)-H + biotin + 2 5'-deoxyadenosine + 2 L-methionine + 2 oxidized [2Fe-2S]-[ferredoxin]. The protein operates within cofactor biosynthesis; biotin biosynthesis; biotin from 7,8-diaminononanoate: step 2/2. Its function is as follows. Catalyzes the conversion of dethiobiotin (DTB) to biotin by the insertion of a sulfur atom into dethiobiotin via a radical-based mechanism. The chain is Biotin synthase from Carboxydothermus hydrogenoformans (strain ATCC BAA-161 / DSM 6008 / Z-2901).